The following is a 288-amino-acid chain: Proteasome assembly chaperone 1 (288 aa).

Residues 1–33 are disordered; sequence MATFFGEVQSVFSRAVDEEEEDEDDDEEEEEDR. Residues 17–33 show a composition bias toward acidic residues; it reads DEEEEDEDDDEEEEEDR.

It belongs to the PSMG1 family. Forms a heterodimer with psmg2. In terms of processing, degraded by the proteasome upon completion of 20S proteasome maturation.

The protein resides in the cytoplasm. Its subcellular location is the endoplasmic reticulum. Its function is as follows. Chaperone protein which promotes assembly of the 20S proteasome as part of a heterodimer with psmg2. This Xenopus laevis (African clawed frog) protein is Proteasome assembly chaperone 1.